A 201-amino-acid polypeptide reads, in one-letter code: MAARTAFGAVCRRLWQGLGNFSVNTSKGNTAKNGGFLLSTNMKWVQFSNLHVDVPKDLTKPVITISDEPDILYKRLSVLVKGHDKAVLDSYGYFAVLAAKELGISIKVHEPPRKIERFTLLQSVHIYKKHRVQYEMRTLYRCLELEHLTGSTADVYLEYIQRNLPEGVAMEVTKTQLEQLPEHIKEPIWETLSEEKEESKS.

It belongs to the universal ribosomal protein uS10 family. As to quaternary structure, component of the mitochondrial ribosome small subunit (28S) which comprises a 12S rRNA and about 30 distinct proteins.

It localises to the mitochondrion. The sequence is that of Small ribosomal subunit protein uS10m (MRPS10) from Pongo abelii (Sumatran orangutan).